The sequence spans 232 residues: Flagellar L-ring protein (232 aa).

The N-terminal stretch at 1–21 is a signal peptide; sequence MQKNAAHTYAISSLLVLSLTG. C22 carries the N-palmitoyl cysteine lipid modification. C22 carries S-diacylglycerol cysteine lipidation.

The protein belongs to the FlgH family. As to quaternary structure, the basal body constitutes a major portion of the flagellar organelle and consists of four rings (L,P,S, and M) mounted on a central rod.

The protein resides in the cell outer membrane. It is found in the bacterial flagellum basal body. Assembles around the rod to form the L-ring and probably protects the motor/basal body from shearing forces during rotation. The polypeptide is Flagellar L-ring protein (Shigella boydii serotype 18 (strain CDC 3083-94 / BS512)).